Here is a 243-residue protein sequence, read N- to C-terminus: Small ribosomal subunit protein uS3 (243 aa).

In terms of domain architecture, KH type-2 spans L39–H107. Residues V212–A243 form a disordered region.

It belongs to the universal ribosomal protein uS3 family. As to quaternary structure, part of the 30S ribosomal subunit. Forms a tight complex with proteins S10 and S14.

In terms of biological role, binds the lower part of the 30S subunit head. Binds mRNA in the 70S ribosome, positioning it for translation. This is Small ribosomal subunit protein uS3 from Chloroflexus aurantiacus (strain ATCC 29364 / DSM 637 / Y-400-fl).